Consider the following 226-residue polypeptide: Probable thiol methyltransferase 2 (226 aa).

Residues W29, W33, W40, and G67 each contribute to the S-adenosyl-L-methionine site. The residue at position 79 (S79) is a Phosphoserine. Residues D88, 116–117, and Y132 each bind S-adenosyl-L-methionine; that span reads DF.

The protein belongs to the class I-like SAM-binding methyltransferase superfamily. TPMT family.

It catalyses the reaction a thiol + S-adenosyl-L-methionine = a methyl thioether + S-adenosyl-L-homocysteine + H(+). Functionally, S-adenosyl-L-methionine-dependent methyltransferase. This is Probable thiol methyltransferase 2 (HOL3) from Arabidopsis thaliana (Mouse-ear cress).